A 560-amino-acid polypeptide reads, in one-letter code: Mitogen-activated protein kinase kinase kinase 3 (560 aa).

The tract at residues 70-91 (KRQSSSSSDNTSDKEEVETEET) is disordered. Positions 303–557 (WLKGQLLGRG…AAELLHHPFV (255 aa)) constitute a Protein kinase domain. Residues 309 to 317 (LGRGSYASV) and lysine 331 each bind ATP. Aspartate 426 acts as the Proton acceptor in catalysis.

This sequence belongs to the protein kinase superfamily. STE Ser/Thr protein kinase family. MAP kinase kinase kinase subfamily. In terms of tissue distribution, expressed at low levels in roots, stems, siliques, leaves, seedlings and flower buds.

It carries out the reaction L-seryl-[protein] + ATP = O-phospho-L-seryl-[protein] + ADP + H(+). The catalysed reaction is L-threonyl-[protein] + ATP = O-phospho-L-threonyl-[protein] + ADP + H(+). The sequence is that of Mitogen-activated protein kinase kinase kinase 3 from Arabidopsis thaliana (Mouse-ear cress).